Reading from the N-terminus, the 288-residue chain is MEIGLREWLIVIGIIVIAGILFDGWRRMRGGKGKLKFRLDRSLSNLPDEDTSAELLGPARVLDTHKEPQLDEHDLPSVSMPAREAREPRESGSKRGKRGGNGPAQGDLNLDLDLDGGPSFSSRDDDFVEPAAKSSPAVADKDQPQAEEVLVISVICRDPAGFKGPALLQNILESGLRFGEMDIFHRHESMAGNGEVLFSMANAVKPGIFDLDDIDHFSTPAVSFFLGLPGPRHPKQAFDVMVAAARKLSQELNGELKDDQRSVLTAQTIEHYRQRIVEFERRALTQKR.

Residue Met1 is a topological domain, periplasmic. The helical transmembrane segment at 2-22 threads the bilayer; the sequence is EIGLREWLIVIGIIVIAGILF. The Cytoplasmic segment spans residues 23-288; sequence DGWRRMRGGK…FERRALTQKR (266 aa). 2 stretches are compositionally biased toward basic and acidic residues: residues 66 to 75 and 83 to 93; these read KEPQLDEHDL and REAREPRESGS. The disordered stretch occupies residues 66–141; it reads KEPQLDEHDL…AKSSPAVADK (76 aa). Over residues 106-117 the composition is skewed to low complexity; that stretch reads GDLNLDLDLDGG.

Belongs to the ZipA family. Interacts with FtsZ via their C-terminal domains.

It is found in the cell inner membrane. Functionally, essential cell division protein that stabilizes the FtsZ protofilaments by cross-linking them and that serves as a cytoplasmic membrane anchor for the Z ring. Also required for the recruitment to the septal ring of downstream cell division proteins. The chain is Cell division protein ZipA from Pseudomonas fluorescens (strain Pf0-1).